The chain runs to 192 residues: Orotate phosphoribosyltransferase (192 aa).

Residue 116 to 124 (EDIVTTGLS) participates in 5-phospho-alpha-D-ribose 1-diphosphate binding. Orotate is bound by residues Thr120 and Arg148.

It belongs to the purine/pyrimidine phosphoribosyltransferase family. PyrE subfamily. In terms of assembly, homodimer. Mg(2+) is required as a cofactor.

The enzyme catalyses orotidine 5'-phosphate + diphosphate = orotate + 5-phospho-alpha-D-ribose 1-diphosphate. Its pathway is pyrimidine metabolism; UMP biosynthesis via de novo pathway; UMP from orotate: step 1/2. Catalyzes the transfer of a ribosyl phosphate group from 5-phosphoribose 1-diphosphate to orotate, leading to the formation of orotidine monophosphate (OMP). The chain is Orotate phosphoribosyltransferase from Brucella abortus (strain S19).